The chain runs to 189 residues: Peptidyl-tRNA hydrolase (189 aa).

Position 15 (tyrosine 15) interacts with tRNA. Histidine 20 (proton acceptor) is an active-site residue. Phenylalanine 66, asparagine 68, and asparagine 114 together coordinate tRNA.

It belongs to the PTH family. Monomer.

Its subcellular location is the cytoplasm. It catalyses the reaction an N-acyl-L-alpha-aminoacyl-tRNA + H2O = an N-acyl-L-amino acid + a tRNA + H(+). Functionally, hydrolyzes ribosome-free peptidyl-tRNAs (with 1 or more amino acids incorporated), which drop off the ribosome during protein synthesis, or as a result of ribosome stalling. In terms of biological role, catalyzes the release of premature peptidyl moieties from peptidyl-tRNA molecules trapped in stalled 50S ribosomal subunits, and thus maintains levels of free tRNAs and 50S ribosomes. In Streptococcus pyogenes serotype M1, this protein is Peptidyl-tRNA hydrolase.